The following is a 1071-amino-acid chain: Exportin-1 (1071 aa).

Residues 46 to 112 (AQEVLTHLKE…KKYVVGLIIK (67 aa)) enclose the Importin N-terminal domain. HEAT repeat units lie at residues 217–240 (QNAP…PLGY), 241–277 (IFET…VSVS), 354–472 (MLLV…YVDT), 515–553 (RFLV…QYPR), 560–597 (KFLK…KCRR), and 602–639 (VQVG…AVGY). The necessary for interaction with Ran and nuclear export complex formation stretch occupies residues 327-450 (CTFLKEHGQL…VREFMKDTDS (124 aa)). Position 391 is a phosphoserine (Ser391). A necessary for interaction with RANBP3 region spans residues 411–481 (TVLSKVRLLM…TEIIMTKKLQ (71 aa)). An N6-acetyllysine modification is found at Lys446. Thr448 is modified (phosphothreonine). The residue at position 450 (Ser450) is a Phosphoserine. Tyr454 is modified (phosphotyrosine). At Lys693 the chain carries N6-acetyllysine. 3 HEAT repeats span residues 775-813 (NFVP…KLGG), 885-916 (TMRN…SFYQ), and 917-954 (TYFC…NLVE). 2 positions are modified to phosphoserine: Ser966 and Ser1031. The HEAT 10 repeat unit spans residues 1002-1039 (FSLNQDIPAFKEHLRDFLVQIKEFAGEDTSDLFLEERE).

This sequence belongs to the exportin family. As to quaternary structure, found in a U snRNA export complex with PHAX/RNUXA, NCBP1/CBP80, NCBP2/CBP20, RAN, XPO1 and m7G-capped RNA. Component of a nuclear export receptor complex composed of KPNB1, RAN, SNUPN and XPO1. Found in a trimeric export complex with SNUPN, RAN and XPO1. Found in a nuclear export complex with RANBP3 and RAN. Found in a 60S ribosomal subunit export complex with NMD3, RAN, XPO1. Interacts with DDX3X, NMD3, NUP42, NUP88, NUP214, RANBP3 and TERT. Interacts with NEMF (via its N-terminus). Interacts with the monomeric form of BIRC5/survivin deacetylated at 'Lys-129'. Interacts with DTNBP1 and SERTAD2; the interactions translocate DTNBP1 and SERTAD2 out of the nucleus. Interacts with ATF2. Interacts with SLC35G1 and STIM1. Interacts with DCAF8. Interacts with CPEB3. Interacts with HAX1. Interacts with BOK; translocates to the cytoplasm. Interacts with HSP90AB1. Interacts with LRPPRC; interacts with LRPPRC alone and also when LRPPRC is in complex with EIF4E and with EIF4E sensitivity element (4ESE)-containing mRNAs to form an EIF4E-dependent mRNA export complex.

It localises to the cytoplasm. The protein resides in the nucleus. It is found in the nucleoplasm. The protein localises to the cajal body. Its subcellular location is the nucleolus. Mediates the nuclear export of cellular proteins (cargos) bearing a leucine-rich nuclear export signal (NES) and of RNAs. In the nucleus, in association with RANBP3, binds cooperatively to the NES on its target protein and to the GTPase Ran in its active GTP-bound form. Docking of this complex to the nuclear pore complex (NPC) is mediated through binding to nucleoporins. Upon transit of a nuclear export complex into the cytoplasm, disassembling of the complex and hydrolysis of Ran-GTP to Ran-GDP (induced by RANBP1 and RANGAP1, respectively) cause release of the cargo from the export receptor. The directionality of nuclear export is thought to be conferred by an asymmetric distribution of the GTP- and GDP-bound forms of Ran between the cytoplasm and nucleus. Involved in U3 snoRNA transport from Cajal bodies to nucleoli. Binds to late precursor U3 snoRNA bearing a TMG cap. The protein is Exportin-1 (Xpo1) of Rattus norvegicus (Rat).